A 118-amino-acid chain; its full sequence is Ribosome-binding factor A (118 aa).

It belongs to the RbfA family. As to quaternary structure, monomer. Binds 30S ribosomal subunits, but not 50S ribosomal subunits or 70S ribosomes.

The protein resides in the cytoplasm. In terms of biological role, one of several proteins that assist in the late maturation steps of the functional core of the 30S ribosomal subunit. Associates with free 30S ribosomal subunits (but not with 30S subunits that are part of 70S ribosomes or polysomes). Required for efficient processing of 16S rRNA. May interact with the 5'-terminal helix region of 16S rRNA. In Bacillus thuringiensis (strain Al Hakam), this protein is Ribosome-binding factor A.